Here is a 447-residue protein sequence, read N- to C-terminus: Alkylglycerol monooxygenase (447 aa).

2 helical membrane passes run A43–G63 and W111–F131. One can recognise a Fatty acid hydroxylase domain in the interval Y118–T249. A Histidine box-1 motif is present at residues H132–H136. Positions H145 to H149 match the Histidine box-2 motif. A helical membrane pass occupies residues S170–I190. Residues H221–H225 carry the Histidine box-3 motif. 3 helical membrane-spanning segments follow: residues F334 to F354, V363 to L383, and I413 to V433.

Belongs to the sterol desaturase family. TMEM195 subfamily. Fe cation serves as cofactor.

It localises to the endoplasmic reticulum membrane. It catalyses the reaction 1-O-(1,2-saturated-alkyl)-sn-glycerol + (6R)-L-erythro-5,6,7,8-tetrahydrobiopterin + O2 = a 1-(1-hydroxyalkyl)-sn-glycerol + (6R)-L-erythro-6,7-dihydrobiopterin + H2O. Glyceryl-ether monooxygenase that cleaves the O-alkyl bond of ether lipids. Ether lipids are essential components of brain membranes. The protein is Alkylglycerol monooxygenase (Agmo) of Rattus norvegicus (Rat).